The chain runs to 83 residues: uncharacterized protein (83 aa).

The helical transmembrane segment at 24–44 threads the bilayer; sequence AMTLLIITNTLLIILSYSVLL.

It localises to the host membrane. This is an uncharacterized protein from Acidianus sp. F28 (AFV-2).